The primary structure comprises 54 residues: Large ribosomal subunit protein bL33 (54 aa).

It belongs to the bacterial ribosomal protein bL33 family.

The protein is Large ribosomal subunit protein bL33 of Legionella pneumophila (strain Lens).